A 417-amino-acid polypeptide reads, in one-letter code: NADH-quinone oxidoreductase subunit D (417 aa).

Belongs to the complex I 49 kDa subunit family. NDH-1 is composed of 14 different subunits. Subunits NuoB, C, D, E, F, and G constitute the peripheral sector of the complex.

The protein localises to the cell inner membrane. It catalyses the reaction a quinone + NADH + 5 H(+)(in) = a quinol + NAD(+) + 4 H(+)(out). In terms of biological role, NDH-1 shuttles electrons from NADH, via FMN and iron-sulfur (Fe-S) centers, to quinones in the respiratory chain. The immediate electron acceptor for the enzyme in this species is believed to be ubiquinone. Couples the redox reaction to proton translocation (for every two electrons transferred, four hydrogen ions are translocated across the cytoplasmic membrane), and thus conserves the redox energy in a proton gradient. This Coxiella burnetii (strain Dugway 5J108-111) protein is NADH-quinone oxidoreductase subunit D.